A 715-amino-acid chain; its full sequence is MRAPSARALLLIPRRGPAVRAWAPAVSSRIWLASEWTPLVRAWTSLIHKPGSGLRFPAPLSGLPGGVGQWATSSGARRCWVLAGPRAAHPLFARLQGAAATGVRDLGNDSQRRPAATGRSEVWKLLGLVRPERGRLSAAVGFLAVSSVITMSAPFFLGRIIDVIYTNPSEGYGDSLTRLCAVLTCVFLCGAAANGIRVYLMQSSGQSIVNRLRTSLFSSILRQEVAFFDKTRTGELINRLSSDTALLGRSVTENLSDGLRAGAQASVGVGMMFFVSPSLATFVLSVVPPISVLAVIYGRYLRKLSKATQDSLAEATQLAEERIGNIRTIRAFGKEMTEVEKYTGRVDQLLQLAQKEALARAGFFGAAGLSGNLIVLSVLYKGGLLMGSAHMTVGELSSFLMYAFWVGLSIGGLSSFYSELMKGLGAGGRLWELLERQPRLPFNEGMVLDEKTFQGALEFRNVHFTYPARPEVSVFQDFSLSIPSGSVTALVGPSGSGKSTVVSLLLRLYDPNSGTVSLDGHDIRQLNPVWLRSKIGTVSQEPVLFSCSVAENIAYGADNLSSVTAQQVERAAEVANAAEFIRSFPQGFDTVVGEKGILLSGGQKQRIAIARALLKNPKILLLDEATSALDAENEHLVQEALDRLMEGRTVLIIAHRLSTIKNANFVAVLDHGKICEHGTHEELLLKPNGLYRKLMNKQSFLSYNGAEQFLEPARA.

The N-terminal 82 residues, 1 to 82 (MRAPSARALL…SSGARRCWVL (82 aa)), are a transit peptide targeting the mitochondrion. The Mitochondrial matrix portion of the chain corresponds to 83–133 (AGPRAAHPLFARLQGAAATGVRDLGNDSQRRPAATGRSEVWKLLGLVRPER). The chain crosses the membrane as a helical span at residues 134 to 157 (GRLSAAVGFLAVSSVITMSAPFFL). In terms of domain architecture, ABC transmembrane type-1 spans 136–422 (LSAAVGFLAV…LSSFYSELMK (287 aa)). Over 158-178 (GRIIDVIYTNPSEGYGDSLTR) the chain is Mitochondrial intermembrane. A helical transmembrane segment spans residues 179–201 (LCAVLTCVFLCGAAANGIRVYLM). Residues 202–252 (QSSGQSIVNRLRTSLFSSILRQEVAFFDKTRTGELINRLSSDTALLGRSVT) are Mitochondrial matrix-facing. N6-acetyllysine is present on Lys230. A helical transmembrane segment spans residues 253–275 (ENLSDGLRAGAQASVGVGMMFFV). The Mitochondrial intermembrane portion of the chain corresponds to 276–278 (SPS). The chain crosses the membrane as a helical span at residues 279-298 (LATFVLSVVPPISVLAVIYG). Over 299-357 (RYLRKLSKATQDSLAEATQLAEERIGNIRTIRAFGKEMTEVEKYTGRVDQLLQLAQKEA) the chain is Mitochondrial matrix. Residues 358-381 (LARAGFFGAAGLSGNLIVLSVLYK) form a helical membrane-spanning segment. At 382–395 (GGLLMGSAHMTVGE) the chain is on the mitochondrial intermembrane side. The chain crosses the membrane as a helical span at residues 396–417 (LSSFLMYAFWVGLSIGGLSSFY). Residues 418–715 (SELMKGLGAG…AEQFLEPARA (298 aa)) lie on the Mitochondrial matrix side of the membrane. The ABC transporter domain maps to 457 to 696 (LEFRNVHFTY…PNGLYRKLMN (240 aa)). Residues Gly495, Gly497, Lys498, Ser499, and Thr500 each coordinate ATP. A Mg(2+)-binding site is contributed by Ser499. An S-glutathionyl cysteine modification is found at Cys547. Asp623 contacts Mg(2+).

The protein belongs to the ABC transporter superfamily. ABCB family. Mitochondrial peptide exporter (TC 3.A.1.212) subfamily. Homodimer or homooligomer. Interacts with PAAT; this interaction regulates ABCB10. Interacts with SLC25A37; this interaction stabilizes SLC25A37 and enhances the function of SLC25A37 to import mitochondrial iron during erythroid differentiation. Interacts with FECH; this interaction may allow the formation of the oligomeric complex with SLC25A37. Forms a complex with ABCB7 and FECH, where a dimeric FECH bridges ABCB7 and ABCB10 homodimers; this complex may be required for cellular iron homeostasis, mitochondrial function and heme biosynthesis. In terms of tissue distribution, expressed at particularly high levels in fetal liver, and erythroid tissues of embryos and adults. Found also in adult bone marrow, liver and kidney, and at lower levels in heart, brain and spleen.

The protein localises to the mitochondrion inner membrane. It catalyses the reaction biliverdin IXalpha(in) + ATP + H2O = biliverdin IXalpha(out) + ADP + phosphate + H(+). Its activity is regulated as follows. Oxidized glutathione (GSSG) stimulates ATP hydrolysis without affecting ATP binding, whereas reduced glutathione (GSH) inhibits ATP binding and hydrolysis. Functionally, ATP-dependent transporter located in the mitochondrial inner membrane that catalyzes the export of biliverdin from the mitochondrial matrix, and plays a crucial role in hemoglobin synthesis and antioxidative stress. Participates in the early step of the heme biosynthetic process during insertion of iron into protoporphyrin IX (PPIX). Involved in the stabilization of the iron transporter mitoferrin-1/SLC25A37. In addition may be involved in mitochondrial unfolded protein response (UPRmt) signaling pathway, although ABCB10 probably does not participate in peptide export from mitochondria. The protein is ATP-binding cassette sub-family B member 10, mitochondrial of Mus musculus (Mouse).